Consider the following 305-residue polypeptide: Mas-related G-protein coupled receptor member A2B (305 aa).

The Extracellular segment spans residues 1 to 17 (MDETLPGSINIRILIPK). Residues 18–38 (LMIIIFGLVGLMGNAIVFWLL) traverse the membrane as a helical segment. Residues 39 to 53 (GFHLRRNAFSVYILN) lie on the Cytoplasmic side of the membrane. The chain crosses the membrane as a helical span at residues 54–74 (LALADFLFLLSSIIASTLFLL). At 75–78 (KVSY) the chain is on the extracellular side. A helical transmembrane segment spans residues 79 to 99 (LSIIFHLCFNTIMMVVYITGI). The Cytoplasmic portion of the chain corresponds to 100-132 (SMLSAISTECCLSVLCPTWYRCHRPVHTSTVMC). A helical transmembrane segment spans residues 133–153 (AVIWVLSLLICILNSYFCAVL). The Extracellular segment spans residues 154 to 167 (HTRYDNDNECLATN). A helical membrane pass occupies residues 168–188 (IFTASYMIFLLVVLCLSSLAL). Over 189–207 (LARLFCGAGQMKLTRFHVT) the chain is Cytoplasmic. Residues 208-228 (ILLTLLVFLLCGLPFVIYCIL) form a helical membrane-spanning segment. The Extracellular segment spans residues 229-244 (LFKIKDDFHVLDVNFY). A helical membrane pass occupies residues 245–265 (LALEVLTAINSCANPIIYFFV). The Cytoplasmic segment spans residues 266 to 305 (GSFRHQLKHQTLKMVLQSALQDTPETAENMVEMSSNKAEP).

It belongs to the G-protein coupled receptor 1 family. Mas subfamily. Expressed in a subset of sensory neurons that includes nociceptors. Expressed in the subclass of non-peptidergic sensory neurons that are IB4(+) and VR1(-).

Its subcellular location is the cell membrane. Functionally, orphan receptor. May be a receptor for RFamide-family neuropeptides such as NPFF and NPAF, which are analgesic in vivo. May regulate nociceptor function and/or development, including the sensation or modulation of pain. This Mus musculus (Mouse) protein is Mas-related G-protein coupled receptor member A2B.